Consider the following 139-residue polypeptide: D-ribose pyranase (139 aa).

Catalysis depends on His20, which acts as the Proton donor. Substrate contacts are provided by residues Asp28, His106, and 128-130; that span reads YAN.

The protein belongs to the RbsD / FucU family. RbsD subfamily. As to quaternary structure, homodecamer.

The protein resides in the cytoplasm. It catalyses the reaction beta-D-ribopyranose = beta-D-ribofuranose. It functions in the pathway carbohydrate metabolism; D-ribose degradation; D-ribose 5-phosphate from beta-D-ribopyranose: step 1/2. In terms of biological role, catalyzes the interconversion of beta-pyran and beta-furan forms of D-ribose. The sequence is that of D-ribose pyranase from Pasteurella multocida (strain Pm70).